Here is a 163-residue protein sequence, read N- to C-terminus: uncharacterized protein (163 aa).

4 consecutive transmembrane segments (helical) span residues glycine 19–isoleucine 39, phenylalanine 63–leucine 83, valine 87–alanine 107, and phenylalanine 119–leucine 139.

It belongs to the DoxX family.

It is found in the cell membrane. This is an uncharacterized protein from Mycobacterium tuberculosis (strain ATCC 25618 / H37Rv).